We begin with the raw amino-acid sequence, 311 residues long: Cytosolic Fe-S cluster assembly factor Nubp1 homolog (311 aa).

Positions 1–21 (MQAPPPEHCPGVESEDAGKGS) are disordered. C9, C23, C26, and C32 together coordinate [4Fe-4S] cluster. 63–70 (GKGGVGKS) is an ATP binding site. Positions 240 and 243 each coordinate [4Fe-4S] cluster.

It belongs to the Mrp/NBP35 ATP-binding proteins family. NUBP1/NBP35 subfamily. In terms of assembly, heterotetramer of 2 Nubp1 and 2 Nubp2 chains. The cofactor is [4Fe-4S] cluster.

The protein localises to the cytoplasm. Its function is as follows. Component of the cytosolic iron-sulfur (Fe/S) protein assembly (CIA) machinery. Required for maturation of extramitochondrial Fe-S proteins. The Nubp1-Nubp2 heterotetramer forms a Fe-S scaffold complex, mediating the de novo assembly of an Fe-S cluster and its transfer to target apoproteins. In Drosophila sechellia (Fruit fly), this protein is Cytosolic Fe-S cluster assembly factor Nubp1 homolog.